The primary structure comprises 390 residues: ATP phosphoribosyltransferase regulatory subunit (390 aa).

The protein belongs to the class-II aminoacyl-tRNA synthetase family. HisZ subfamily. As to quaternary structure, heteromultimer composed of HisG and HisZ subunits.

Its subcellular location is the cytoplasm. It functions in the pathway amino-acid biosynthesis; L-histidine biosynthesis; L-histidine from 5-phospho-alpha-D-ribose 1-diphosphate: step 1/9. Required for the first step of histidine biosynthesis. May allow the feedback regulation of ATP phosphoribosyltransferase activity by histidine. This Nitrosomonas eutropha (strain DSM 101675 / C91 / Nm57) protein is ATP phosphoribosyltransferase regulatory subunit.